We begin with the raw amino-acid sequence, 796 residues long: Protein translocase subunit SecA 2 (796 aa).

ATP contacts are provided by residues Gln-84, 102–106 (GEGKT), and Asp-496.

It belongs to the SecA family. In terms of assembly, monomer and homodimer. Part of the essential Sec protein translocation apparatus which comprises SecA, SecYEG and auxiliary proteins SecDF. Other proteins may also be involved.

The protein resides in the cell membrane. Its subcellular location is the cytoplasm. It catalyses the reaction ATP + H2O + cellular proteinSide 1 = ADP + phosphate + cellular proteinSide 2.. Part of the Sec protein translocase complex. Interacts with the SecYEG preprotein conducting channel. Has a central role in coupling the hydrolysis of ATP to the transfer of proteins into and across the cell membrane, serving as an ATP-driven molecular motor driving the stepwise translocation of polypeptide chains across the membrane. The protein is Protein translocase subunit SecA 2 of Staphylococcus haemolyticus (strain JCSC1435).